The sequence spans 443 residues: C4-dicarboxylate transport protein (443 aa).

9 consecutive transmembrane segments (helical) span residues 17 to 37 (PFYSHLYVQVLAAIAAGILLG), 57 to 77 (LVKMVIAPVIFLTVATGIAGM), 92 to 112 (LYFLTFSTLALVIGMIVANVV), 139 to 159 (EQSIVGFLTNIIPTTIVGAFA), 161 to 181 (GDILQVLFFSVLFGIALAMVG), 201 to 221 (LVGILMKAAPIGAFGAMAFTI), 234 to 254 (MLIGTFYITSLLFVLVVLGAV), 320 to 340 (IYMTLAALFIAQATGIQLSWG), and 368 to 388 (AATLSVVPSVPVAGMALILGI).

Belongs to the dicarboxylate/amino acid:cation symporter (DAACS) (TC 2.A.23) family.

Its subcellular location is the cell inner membrane. In terms of biological role, responsible for the transport of dicarboxylates such as succinate, fumarate, and malate from the periplasm across the membrane. This is C4-dicarboxylate transport protein from Rhizobium etli (strain ATCC 51251 / DSM 11541 / JCM 21823 / NBRC 15573 / CFN 42).